The following is a 1405-amino-acid chain: DNA-directed RNA polymerase subunit beta' (1405 aa).

4 residues coordinate Zn(2+): C70, C72, C85, and C88. Mg(2+) contacts are provided by D460, D462, and D464. Residues C814, C888, C895, and C898 each coordinate Zn(2+).

The protein belongs to the RNA polymerase beta' chain family. As to quaternary structure, the RNAP catalytic core consists of 2 alpha, 1 beta, 1 beta' and 1 omega subunit. When a sigma factor is associated with the core the holoenzyme is formed, which can initiate transcription. Mg(2+) serves as cofactor. The cofactor is Zn(2+).

The enzyme catalyses RNA(n) + a ribonucleoside 5'-triphosphate = RNA(n+1) + diphosphate. Functionally, DNA-dependent RNA polymerase catalyzes the transcription of DNA into RNA using the four ribonucleoside triphosphates as substrates. This is DNA-directed RNA polymerase subunit beta' from Shewanella sediminis (strain HAW-EB3).